We begin with the raw amino-acid sequence, 145 residues long: Large ribosomal subunit protein uL15 (145 aa).

Residues 1 to 52 form a disordered region; it reads MKLNTIAPAEGSKKDRRRVGRGIGSGFGKTAGRGHKGQHARSGGYHKVGFEG. Positions 21 to 31 are enriched in gly residues; it reads RGIGSGFGKTA.

This sequence belongs to the universal ribosomal protein uL15 family. As to quaternary structure, part of the 50S ribosomal subunit.

Functionally, binds to the 23S rRNA. This is Large ribosomal subunit protein uL15 from Acidithiobacillus ferrooxidans (strain ATCC 53993 / BNL-5-31) (Leptospirillum ferrooxidans (ATCC 53993)).